The primary structure comprises 249 residues: DNA repair protein RecO (249 aa).

It belongs to the RecO family.

Its function is as follows. Involved in DNA repair and RecF pathway recombination. This is DNA repair protein RecO from Sinorhizobium medicae (strain WSM419) (Ensifer medicae).